We begin with the raw amino-acid sequence, 203 residues long: ATP-dependent Clp protease proteolytic subunit (203 aa).

Serine 107 (nucleophile) is an active-site residue. Histidine 132 is an active-site residue.

It belongs to the peptidase S14 family. As to quaternary structure, fourteen ClpP subunits assemble into 2 heptameric rings which stack back to back to give a disk-like structure with a central cavity, resembling the structure of eukaryotic proteasomes.

The protein localises to the cytoplasm. It catalyses the reaction Hydrolysis of proteins to small peptides in the presence of ATP and magnesium. alpha-casein is the usual test substrate. In the absence of ATP, only oligopeptides shorter than five residues are hydrolyzed (such as succinyl-Leu-Tyr-|-NHMec, and Leu-Tyr-Leu-|-Tyr-Trp, in which cleavage of the -Tyr-|-Leu- and -Tyr-|-Trp bonds also occurs).. Functionally, cleaves peptides in various proteins in a process that requires ATP hydrolysis. Has a chymotrypsin-like activity. Plays a major role in the degradation of misfolded proteins. In Shewanella piezotolerans (strain WP3 / JCM 13877), this protein is ATP-dependent Clp protease proteolytic subunit.